We begin with the raw amino-acid sequence, 1014 residues long: Klotho (1014 aa).

Positions 1–34 (MPARAPPRRLPRLLLLRLLSLHLLLLTLRARCLS) are cleaved as a signal peptide. At 35-983 (AEPGQGAQTW…GCGFFQTRKS (949 aa)) the chain is on the extracellular side. Glycosyl hydrolase-1 regions lie at residues 59-508 (LHDT…NNGF) and 517-955 (LEGT…NNGF). 6 N-linked (GlcNAc...) asparagine glycosylation sites follow: Asn-161, Asn-285, Asn-346, Asn-609, Asn-614, and Asn-696. A helical transmembrane segment spans residues 984–1004 (LLAFISFLVFAFVTSLALIYY). Topologically, residues 1005 to 1014 (YSKKGRRRYK) are cytoplasmic.

This sequence belongs to the glycosyl hydrolase 1 family. Klotho subfamily. In terms of assembly, homodimer. Interacts with FGF23 and FGFR1. N-glycosylated. In terms of tissue distribution, present in cortical renal tubules and the parathyroid (at protein level). Strongly expressed in kidney. Expressed at low levels in brain, lung, intestine and ovaries.

It is found in the cell membrane. The protein resides in the apical cell membrane. The protein localises to the secreted. It catalyses the reaction a beta-D-glucuronoside + H2O = D-glucuronate + an alcohol. Functionally, may have weak glycosidase activity towards glucuronylated steroids. However, it lacks essential active site Glu residues at positions 241 and 874, suggesting it may be inactive as a glycosidase in vivo. May be involved in the regulation of calcium and phosphorus homeostasis by inhibiting the synthesis of active vitamin D. Essential factor for the specific interaction between FGF23 and FGFR1. In terms of biological role, the Klotho peptide generated by cleavage of the membrane-bound isoform may be an anti-aging circulating hormone which would extend life span by inhibiting insulin/IGF1 signaling. This chain is Klotho (Kl), found in Rattus norvegicus (Rat).